The sequence spans 205 residues: GTP cyclohydrolase-2 (205 aa).

49–53 (RLHSE) contributes to the GTP binding site. Zn(2+) is bound by residues cysteine 54, cysteine 65, and cysteine 67. GTP-binding positions include glutamine 70, 92–94 (EGR), and threonine 114. Residue aspartate 126 is the Proton acceptor of the active site. The Nucleophile role is filled by arginine 128. GTP-binding residues include threonine 149 and lysine 154.

Belongs to the GTP cyclohydrolase II family. Zn(2+) is required as a cofactor.

It catalyses the reaction GTP + 4 H2O = 2,5-diamino-6-hydroxy-4-(5-phosphoribosylamino)-pyrimidine + formate + 2 phosphate + 3 H(+). It participates in cofactor biosynthesis; riboflavin biosynthesis; 5-amino-6-(D-ribitylamino)uracil from GTP: step 1/4. In terms of biological role, catalyzes the conversion of GTP to 2,5-diamino-6-ribosylamino-4(3H)-pyrimidinone 5'-phosphate (DARP), formate and pyrophosphate. In Pseudomonas aeruginosa (strain LESB58), this protein is GTP cyclohydrolase-2.